Here is a 1208-residue protein sequence, read N- to C-terminus: DNA-directed RNA polymerase subunit beta (1208 aa).

The protein belongs to the RNA polymerase beta chain family. As to quaternary structure, the RNAP catalytic core consists of 2 alpha, 1 beta, 1 beta' and 1 omega subunit. When a sigma factor is associated with the core the holoenzyme is formed, which can initiate transcription.

It catalyses the reaction RNA(n) + a ribonucleoside 5'-triphosphate = RNA(n+1) + diphosphate. Functionally, DNA-dependent RNA polymerase catalyzes the transcription of DNA into RNA using the four ribonucleoside triphosphates as substrates. The polypeptide is DNA-directed RNA polymerase subunit beta (Enterococcus faecium (Streptococcus faecium)).